The chain runs to 898 residues: Eukaryotic translation initiation factor 3 subunit C (898 aa).

The span at methionine 1–aspartate 10 shows a compositional bias: basic and acidic residues. Disordered regions lie at residues methionine 1 to aspartate 38 and valine 162 to lysine 238. Residues serine 11–glutamate 23 are compositionally biased toward acidic residues. Over residues aspartate 24–leucine 37 the composition is skewed to basic and acidic residues. Acidic residues predominate over residues aspartate 170–glutamate 187. Residues serine 189–glutamate 202 are compositionally biased toward basic and acidic residues. The span at serine 209–serine 218 shows a compositional bias: acidic residues. The span at serine 219 to asparagine 228 shows a compositional bias: low complexity. In terms of domain architecture, PCI spans tyrosine 630–proline 806. Positions glutamine 829–phenylalanine 898 are disordered. 2 stretches are compositionally biased toward basic and acidic residues: residues arginine 850–lysine 859 and glycine 866–arginine 878. Over residues glutamine 888 to phenylalanine 898 the composition is skewed to basic residues.

This sequence belongs to the eIF-3 subunit C family. Component of the eukaryotic translation initiation factor 3 (eIF-3) complex.

Its subcellular location is the cytoplasm. In terms of biological role, component of the eukaryotic translation initiation factor 3 (eIF-3) complex, which is involved in protein synthesis of a specialized repertoire of mRNAs and, together with other initiation factors, stimulates binding of mRNA and methionyl-tRNAi to the 40S ribosome. The eIF-3 complex specifically targets and initiates translation of a subset of mRNAs involved in cell proliferation. This chain is Eukaryotic translation initiation factor 3 subunit C, found in Caenorhabditis elegans.